The sequence spans 148 residues: Urease accessory protein UreE (148 aa).

Belongs to the UreE family.

It localises to the cytoplasm. Involved in urease metallocenter assembly. Binds nickel. Probably functions as a nickel donor during metallocenter assembly. In Aliarcobacter butzleri (strain RM4018) (Arcobacter butzleri), this protein is Urease accessory protein UreE.